A 273-amino-acid chain; its full sequence is 2-dehydro-3-deoxyphosphooctonate aldolase (273 aa).

It belongs to the KdsA family.

It is found in the cytoplasm. It catalyses the reaction D-arabinose 5-phosphate + phosphoenolpyruvate + H2O = 3-deoxy-alpha-D-manno-2-octulosonate-8-phosphate + phosphate. The protein operates within carbohydrate biosynthesis; 3-deoxy-D-manno-octulosonate biosynthesis; 3-deoxy-D-manno-octulosonate from D-ribulose 5-phosphate: step 2/3. Its pathway is bacterial outer membrane biogenesis; lipopolysaccharide biosynthesis. The protein is 2-dehydro-3-deoxyphosphooctonate aldolase of Nitratidesulfovibrio vulgaris (strain DP4) (Desulfovibrio vulgaris).